The sequence spans 211 residues: Uracil phosphoribosyltransferase (211 aa).

5-phospho-alpha-D-ribose 1-diphosphate contacts are provided by residues Arg-78, Arg-103, and 130–138 (DPMLATGAT). Uracil-binding positions include Ile-195 and 200-202 (GDA). Asp-201 serves as a coordination point for 5-phospho-alpha-D-ribose 1-diphosphate.

It belongs to the UPRTase family. The cofactor is Mg(2+).

It carries out the reaction UMP + diphosphate = 5-phospho-alpha-D-ribose 1-diphosphate + uracil. Its pathway is pyrimidine metabolism; UMP biosynthesis via salvage pathway; UMP from uracil: step 1/1. Its activity is regulated as follows. Allosterically activated by GTP. Its function is as follows. Catalyzes the conversion of uracil and 5-phospho-alpha-D-ribose 1-diphosphate (PRPP) to UMP and diphosphate. The polypeptide is Uracil phosphoribosyltransferase (Renibacterium salmoninarum (strain ATCC 33209 / DSM 20767 / JCM 11484 / NBRC 15589 / NCIMB 2235)).